A 195-amino-acid chain; its full sequence is 3-isopropylmalate dehydratase small subunit (195 aa).

This sequence belongs to the LeuD family. LeuD type 1 subfamily. In terms of assembly, heterodimer of LeuC and LeuD.

The catalysed reaction is (2R,3S)-3-isopropylmalate = (2S)-2-isopropylmalate. Its pathway is amino-acid biosynthesis; L-leucine biosynthesis; L-leucine from 3-methyl-2-oxobutanoate: step 2/4. Catalyzes the isomerization between 2-isopropylmalate and 3-isopropylmalate, via the formation of 2-isopropylmaleate. The polypeptide is 3-isopropylmalate dehydratase small subunit (Parafrankia sp. (strain EAN1pec)).